The sequence spans 293 residues: MQKVTFPNKILPYFLLAPQIVLTVVFFFWPASQAIYQSFMREDAFGLKSTFVELANFTAVLSDPNYLHSVQVTVVFNVLTALLAMGVALLLATAADRVIRGQTFYRTLLIWPYAVAPAVAGMLWLFIFNPAMGTFAYLLRRNGIAWDPLLDGNQAMGLVVVAAAWKQISYNFLFFVAGLQAIPKSLIEAAAIDGARGARRFWTIVFPLLAPTSFFLLVVNTVYAFFDTFGIIHAVTGGGPAKATETLVYKVYNDGFVNLNLGSSSAQSVILMAIVIALTAFQFRFVEKRVHYS.

6 helical membrane-spanning segments follow: residues 10–30 (ILPY…FFWP), 72–92 (VTVV…LLLA), 108–128 (LLIW…LFIF), 155–177 (AMGL…FFVA), 204–224 (IVFP…TVYA), and 261–281 (LGSS…LTAF). Residues 66–282 (YLHSVQVTVV…AIVIALTAFQ (217 aa)) enclose the ABC transmembrane type-1 domain.

The protein belongs to the binding-protein-dependent transport system permease family. In terms of assembly, the complex is composed of two ATP-binding proteins (UgpC), two transmembrane proteins (UgpA and UgpE) and a solute-binding protein (UgpB).

The protein localises to the cell inner membrane. Its function is as follows. Part of the ABC transporter complex UgpBAEC involved in sn-glycerol-3-phosphate (G3P) import. Probably responsible for the translocation of the substrate across the membrane. The protein is sn-glycerol-3-phosphate transport system permease protein UgpA (ugpA) of Brucella abortus biovar 1 (strain 9-941).